Here is a 414-residue protein sequence, read N- to C-terminus: Serine hydroxymethyltransferase (414 aa).

Residues Leu-116 and 120-122 contribute to the (6S)-5,6,7,8-tetrahydrofolate site; that span reads GHL. Lys-225 carries the N6-(pyridoxal phosphate)lysine modification. (6S)-5,6,7,8-tetrahydrofolate is bound at residue 349 to 351; it reads SPF.

This sequence belongs to the SHMT family. As to quaternary structure, homodimer. It depends on pyridoxal 5'-phosphate as a cofactor.

The protein localises to the cytoplasm. The catalysed reaction is (6R)-5,10-methylene-5,6,7,8-tetrahydrofolate + glycine + H2O = (6S)-5,6,7,8-tetrahydrofolate + L-serine. It functions in the pathway one-carbon metabolism; tetrahydrofolate interconversion. The protein operates within amino-acid biosynthesis; glycine biosynthesis; glycine from L-serine: step 1/1. Functionally, catalyzes the reversible interconversion of serine and glycine with tetrahydrofolate (THF) serving as the one-carbon carrier. This reaction serves as the major source of one-carbon groups required for the biosynthesis of purines, thymidylate, methionine, and other important biomolecules. Also exhibits THF-independent aldolase activity toward beta-hydroxyamino acids, producing glycine and aldehydes, via a retro-aldol mechanism. The chain is Serine hydroxymethyltransferase from Oenococcus oeni (strain ATCC BAA-331 / PSU-1).